Here is a 222-residue protein sequence, read N- to C-terminus: Triosephosphate isomerase (222 aa).

Substrate is bound at residue 9–11 (NFK). The active-site Electrophile is histidine 93. Residue glutamate 141 is the Proton acceptor of the active site. Substrate-binding positions include isoleucine 146, glycine 181, and 202–203 (AS).

Belongs to the triosephosphate isomerase family. In terms of assembly, homotetramer; dimer of dimers.

Its subcellular location is the cytoplasm. The catalysed reaction is D-glyceraldehyde 3-phosphate = dihydroxyacetone phosphate. It participates in carbohydrate biosynthesis; gluconeogenesis. Its pathway is carbohydrate degradation; glycolysis; D-glyceraldehyde 3-phosphate from glycerone phosphate: step 1/1. Its function is as follows. Involved in the gluconeogenesis. Catalyzes stereospecifically the conversion of dihydroxyacetone phosphate (DHAP) to D-glyceraldehyde-3-phosphate (G3P). This chain is Triosephosphate isomerase, found in Methanothermus fervidus (strain ATCC 43054 / DSM 2088 / JCM 10308 / V24 S).